Consider the following 203-residue polypeptide: Large ribosomal subunit protein uL13 (203 aa).

The residue at position 2 (Ala-2) is an N-acetylalanine. Arg-59 bears the Citrulline mark. Ser-77 is modified (phosphoserine; by ZIPK/DAPK3). Citrulline is present on Arg-140. An N6-acetyllysine modification is found at Lys-191.

This sequence belongs to the universal ribosomal protein uL13 family. In terms of assembly, component of the 60S ribosome. Component of the GAIT complex. Interacts with EIF4G1. Phosphorylation at Ser-77 upon interferon-gamma treatment in macrophages involves a DAPK1-DAPK3 kinase cascade and is causing release from the ribosome, association with the GAIT complex and subsequent involvement in transcript-selective translation inhibition. In terms of processing, citrullinated by PADI4.

It is found in the cytoplasm. Associated with ribosomes but is not required for canonical ribosome function and has extra-ribosomal functions. Component of the GAIT (gamma interferon-activated inhibitor of translation) complex which mediates interferon-gamma-induced transcript-selective translation inhibition in inflammation processes. Upon interferon-gamma activation and subsequent phosphorylation dissociates from the ribosome and assembles into the GAIT complex which binds to stem loop-containing GAIT elements in the 3'-UTR of diverse inflammatory mRNAs (such as ceruplasmin) and suppresses their translation. In the GAIT complex interacts with m7G cap-bound eIF4G at or near the eIF3-binding site and blocks the recruitment of the 43S ribosomal complex. Involved in methylation of rRNA. The protein is Large ribosomal subunit protein uL13 (Rpl13a) of Mus musculus (Mouse).